The chain runs to 521 residues: Bifunctional purine biosynthesis protein PurH (521 aa).

The MGS-like domain maps to 1–145 (MIKQALISVS…KNHRDVTVVV (145 aa)).

It belongs to the PurH family.

The catalysed reaction is (6R)-10-formyltetrahydrofolate + 5-amino-1-(5-phospho-beta-D-ribosyl)imidazole-4-carboxamide = 5-formamido-1-(5-phospho-D-ribosyl)imidazole-4-carboxamide + (6S)-5,6,7,8-tetrahydrofolate. It catalyses the reaction IMP + H2O = 5-formamido-1-(5-phospho-D-ribosyl)imidazole-4-carboxamide. It participates in purine metabolism; IMP biosynthesis via de novo pathway; 5-formamido-1-(5-phospho-D-ribosyl)imidazole-4-carboxamide from 5-amino-1-(5-phospho-D-ribosyl)imidazole-4-carboxamide (10-formyl THF route): step 1/1. The protein operates within purine metabolism; IMP biosynthesis via de novo pathway; IMP from 5-formamido-1-(5-phospho-D-ribosyl)imidazole-4-carboxamide: step 1/1. The sequence is that of Bifunctional purine biosynthesis protein PurH from Burkholderia orbicola (strain MC0-3).